A 104-amino-acid polypeptide reads, in one-letter code: Large ribosomal subunit protein bL21 (104 aa).

The protein belongs to the bacterial ribosomal protein bL21 family. In terms of assembly, part of the 50S ribosomal subunit. Contacts protein L20.

This protein binds to 23S rRNA in the presence of protein L20. This is Large ribosomal subunit protein bL21 from Streptococcus thermophilus (strain ATCC BAA-491 / LMD-9).